The primary structure comprises 193 residues: Phosphoheptose isomerase (193 aa).

The SIS domain occupies 37-193 (LAASFKADGK…QLIEKEMASV (157 aa)). 52 to 54 (NGG) provides a ligand contact to substrate. His61 and Glu65 together coordinate Zn(2+). Substrate is bound by residues Glu65, 93-94 (ND), 119-121 (STS), Ser124, and Gln172. Residues Gln172 and His180 each contribute to the Zn(2+) site.

This sequence belongs to the SIS family. GmhA subfamily. In terms of assembly, homotetramer. Zn(2+) serves as cofactor.

The protein localises to the cytoplasm. It catalyses the reaction 2 D-sedoheptulose 7-phosphate = D-glycero-alpha-D-manno-heptose 7-phosphate + D-glycero-beta-D-manno-heptose 7-phosphate. The protein operates within carbohydrate biosynthesis; D-glycero-D-manno-heptose 7-phosphate biosynthesis; D-glycero-alpha-D-manno-heptose 7-phosphate and D-glycero-beta-D-manno-heptose 7-phosphate from sedoheptulose 7-phosphate: step 1/1. Its function is as follows. Catalyzes the isomerization of sedoheptulose 7-phosphate in D-glycero-D-manno-heptose 7-phosphate. This is Phosphoheptose isomerase from Edwardsiella ictaluri (strain 93-146).